The chain runs to 378 residues: Cysteine synthase (378 aa).

A disordered region spans residues 10–31; that stretch reads NSEGDSNQQQNNNNNSNNNLKE. A compositionally biased stretch (low complexity) spans 15–28; sequence SNQQQNNNNNSNNN. Residue Lys79 is modified to N6-(pyridoxal phosphate)lysine. Pyridoxal 5'-phosphate contacts are provided by residues 215–219 and Ser319; that span reads GTGGT.

It belongs to the cysteine synthase/cystathionine beta-synthase family. It depends on pyridoxal 5'-phosphate as a cofactor.

It carries out the reaction O-acetyl-L-serine + hydrogen sulfide = L-cysteine + acetate. Its pathway is amino-acid biosynthesis; L-cysteine biosynthesis; L-cysteine from L-serine: step 2/2. This chain is Cysteine synthase (cysK), found in Dictyostelium discoideum (Social amoeba).